Reading from the N-terminus, the 842-residue chain is Protein P (842 aa).

Residues 1–177 (MPLSYQHFRR…FCGSPYTWEQ (177 aa)) are terminal protein domain (TP). The tract at residues 178-345 (DLQHGAFLDG…YCLSHLVNLL (168 aa)) is spacer. The segment at 184-238 (FLDGPSRVGKEPFHQQSSRIPSRSPVGPSIQSKYQQSRLGLQSQKGPLARGQQGR) is disordered. Over residues 212–228 (SIQSKYQQSRLGLQSQK) the composition is skewed to polar residues. Residues 346-689 (QDWGPCTEHG…YMNLYPVARQ (344 aa)) form a polymerase/reverse transcriptase domain (RT) region. In terms of domain architecture, Reverse transcriptase spans 356–599 (EYHIRIPRTP…YSLNFMGYVI (244 aa)). Positions 428, 550, and 551 each coordinate Mg(2+).

This sequence belongs to the hepadnaviridae P protein family.

It catalyses the reaction DNA(n) + a 2'-deoxyribonucleoside 5'-triphosphate = DNA(n+1) + diphosphate. The catalysed reaction is Endonucleolytic cleavage to 5'-phosphomonoester.. Its activity is regulated as follows. Activated by host HSP70 and HSP40 in vitro to be able to bind the epsilon loop of the pgRNA. Because deletion of the RNase H region renders the protein partly chaperone-independent, the chaperones may be needed indirectly to relieve occlusion of the RNA-binding site by this domain. Inhibited by several reverse-transcriptase inhibitors: Lamivudine, Adefovir and Entecavir. In terms of biological role, multifunctional enzyme that converts the viral RNA genome into dsDNA in viral cytoplasmic capsids. This enzyme displays a DNA polymerase activity that can copy either DNA or RNA templates, and a ribonuclease H (RNase H) activity that cleaves the RNA strand of RNA-DNA heteroduplexes in a partially processive 3'- to 5'-endonucleasic mode. Neo-synthesized pregenomic RNA (pgRNA) are encapsidated together with the P protein, and reverse-transcribed inside the nucleocapsid. Initiation of reverse-transcription occurs first by binding the epsilon loop on the pgRNA genome, and is initiated by protein priming, thereby the 5'-end of (-)DNA is covalently linked to P protein. Partial (+)DNA is synthesized from the (-)DNA template and generates the relaxed circular DNA (RC-DNA) genome. After budding and infection, the RC-DNA migrates in the nucleus, and is converted into a plasmid-like covalently closed circular DNA (cccDNA). The activity of P protein does not seem to be necessary for cccDNA generation, and is presumably released from (+)DNA by host nuclear DNA repair machinery. The polypeptide is Protein P (Hepatitis B virus genotype G (isolate United States/USG17/2002) (HBV-G)).